The following is a 437-amino-acid chain: Ribosomal protein uS12 methylthiotransferase RimO (437 aa).

The MTTase N-terminal domain occupies 4-114 (PRVSFVSLGC…VMAAVHEAAP (111 aa)). 6 residues coordinate [4Fe-4S] cluster: cysteine 13, cysteine 49, cysteine 78, cysteine 145, cysteine 149, and cysteine 152. One can recognise a Radical SAM core domain in the interval 131–369 (LTPRHYAYLK…MQRQQKISAT (239 aa)). Residues 372 to 437 (AKKVGKRLPV…DAYDLYGSAV (66 aa)) enclose the TRAM domain.

Belongs to the methylthiotransferase family. RimO subfamily. [4Fe-4S] cluster serves as cofactor.

Its subcellular location is the cytoplasm. It catalyses the reaction L-aspartate(89)-[ribosomal protein uS12]-hydrogen + (sulfur carrier)-SH + AH2 + 2 S-adenosyl-L-methionine = 3-methylsulfanyl-L-aspartate(89)-[ribosomal protein uS12]-hydrogen + (sulfur carrier)-H + 5'-deoxyadenosine + L-methionine + A + S-adenosyl-L-homocysteine + 2 H(+). Its function is as follows. Catalyzes the methylthiolation of an aspartic acid residue of ribosomal protein uS12. In Mesorhizobium japonicum (strain LMG 29417 / CECT 9101 / MAFF 303099) (Mesorhizobium loti (strain MAFF 303099)), this protein is Ribosomal protein uS12 methylthiotransferase RimO.